The following is a 313-amino-acid chain: DNA-directed RNA polymerase subunit alpha (313 aa).

An alpha N-terminal domain (alpha-NTD) region spans residues M1–N226. Residues K243–E313 are alpha C-terminal domain (alpha-CTD).

Belongs to the RNA polymerase alpha chain family. As to quaternary structure, homodimer. The RNAP catalytic core consists of 2 alpha, 1 beta, 1 beta' and 1 omega subunit. When a sigma factor is associated with the core the holoenzyme is formed, which can initiate transcription.

The enzyme catalyses RNA(n) + a ribonucleoside 5'-triphosphate = RNA(n+1) + diphosphate. Its function is as follows. DNA-dependent RNA polymerase catalyzes the transcription of DNA into RNA using the four ribonucleoside triphosphates as substrates. The sequence is that of DNA-directed RNA polymerase subunit alpha from Carboxydothermus hydrogenoformans (strain ATCC BAA-161 / DSM 6008 / Z-2901).